A 152-amino-acid polypeptide reads, in one-letter code: Spermine/spermidine N(1)-acetyltransferase (152 aa).

One can recognise an N-acetyltransferase domain in the interval Ile3 to Leu152. Acetyl-CoA contacts are provided by residues Phe82–Ile84, Gln89–Lys95, and Asn122–Arg131. Catalysis depends on Tyr129, which acts as the Proton donor.

Belongs to the acetyltransferase family.

It carries out the reaction an alkane-alpha,omega-diamine + acetyl-CoA = an N-acetylalkane-alpha,omega-diamine + CoA + H(+). The catalysed reaction is spermine + acetyl-CoA = N(1)-acetylspermine + CoA + H(+). The enzyme catalyses spermidine + acetyl-CoA = N(1)-acetylspermidine + CoA + H(+). It functions in the pathway amine and polyamine degradation; spermine degradation. Its pathway is amine and polyamine degradation; spermidine degradation. Its activity is regulated as follows. Putrescine and N(8)-acetylspermidine are competitive inhibitors of spermidine acetylation. Functionally, acetylates both spermidine and spermine at primary propyl amine moieties, with spermine being the preferred substrate. The sequence is that of Spermine/spermidine N(1)-acetyltransferase (bltD) from Bacillus subtilis (strain 168).